A 259-amino-acid chain; its full sequence is Hydroxyacylglutathione hydrolase (259 aa).

Positions 56, 58, 60, 61, 112, 133, and 171 each coordinate Zn(2+). Residues 220 to 243 (NPFLRTGETSVKEKADERSDAQNT) form a disordered region. A compositionally biased stretch (basic and acidic residues) spans 229–239 (SVKEKADERSD).

Belongs to the metallo-beta-lactamase superfamily. Glyoxalase II family. As to quaternary structure, monomer. Requires Zn(2+) as cofactor.

The catalysed reaction is an S-(2-hydroxyacyl)glutathione + H2O = a 2-hydroxy carboxylate + glutathione + H(+). It functions in the pathway secondary metabolite metabolism; methylglyoxal degradation; (R)-lactate from methylglyoxal: step 2/2. Functionally, thiolesterase that catalyzes the hydrolysis of S-D-lactoyl-glutathione to form glutathione and D-lactic acid. The sequence is that of Hydroxyacylglutathione hydrolase from Pseudomonas syringae pv. syringae (strain B728a).